Consider the following 301-residue polypeptide: Putative S-adenosyl-L-methionine-dependent methyltransferase BCG_0775c (301 aa).

S-adenosyl-L-methionine is bound by residues D130 and D159–L160.

This sequence belongs to the UPF0677 family.

In terms of biological role, exhibits S-adenosyl-L-methionine-dependent methyltransferase activity. This is Putative S-adenosyl-L-methionine-dependent methyltransferase BCG_0775c from Mycobacterium bovis (strain BCG / Pasteur 1173P2).